The primary structure comprises 336 residues: Octanoyltransferase (336 aa).

A compositionally biased stretch (polar residues) spans 1–16; the sequence is MPKSALMSSSFQTSVS. 2 disordered regions span residues 1 to 22 and 48 to 88; these read MPKS…PLPV and QGKG…GGGR. Residues 1–92 form a unknown region; that stretch reads MPKSALMSSS…AAGGGRTIRD (92 aa). The interval 93–336 is lipB domain; that stretch reads VKEAAFDVLD…GQEALSVASP (244 aa). The BPL/LPL catalytic domain maps to 124-318; it reads VGGRPTLLLV…AFALTFADYD (195 aa). Residues 170–177, 244–246, and 257–259 contribute to the substrate site; these read RGGDVTYH, SIG, and GIG. The active-site Acyl-thioester intermediate is the Cys-275.

It in the C-terminal section; belongs to the LipB family.

It localises to the cytoplasm. The enzyme catalyses octanoyl-[ACP] + L-lysyl-[protein] = N(6)-octanoyl-L-lysyl-[protein] + holo-[ACP] + H(+). It functions in the pathway protein modification; protein lipoylation via endogenous pathway; protein N(6)-(lipoyl)lysine from octanoyl-[acyl-carrier-protein]: step 1/2. Its function is as follows. Catalyzes the transfer of endogenously produced octanoic acid from octanoyl-acyl-carrier-protein onto the lipoyl domains of lipoate-dependent enzymes. Lipoyl-ACP can also act as a substrate although octanoyl-ACP is likely to be the physiological substrate. This is Octanoyltransferase from Deinococcus radiodurans (strain ATCC 13939 / DSM 20539 / JCM 16871 / CCUG 27074 / LMG 4051 / NBRC 15346 / NCIMB 9279 / VKM B-1422 / R1).